The chain runs to 484 residues: TPR repeat-containing protein YvcD (484 aa).

TPR repeat units follow at residues 21-54 (GQYF…EPED), 55-88 (SEML…LEAE), and 187-220 (WSAY…NEGN).

This is TPR repeat-containing protein YvcD (yvcD) from Bacillus subtilis (strain 168).